The primary structure comprises 419 residues: Transcription factor IIIB 50 kDa subunit (419 aa).

A TFIIB-type zinc finger spans residues 2–36; the sequence is PGRGRCPDCGSTELVEDSHYSQSQLVCSDCGCVVT. Residues cysteine 7, cysteine 10, cysteine 28, and cysteine 31 each contribute to the Zn(2+) site. 2 repeat units span residues 72-157 and 173-249. Positions 108–114 are interaction with target DNA; the sequence is AARLQKK. Residues 314-326 are compositionally biased toward basic and acidic residues; it reads DGTAEVETREKEP. The segment at 314–351 is disordered; the sequence is DGTAEVETREKEPPGWGQGQGEGEVGNNSLGLPQGKRP. Serine 353 bears the Phosphoserine mark. Positions 357 to 363 are required for the formation of a ternary complex with DNA and TBP; not required for interaction with TBP in the absence of DNA; it reads LLPPCML. Cysteine 361 is subject to Cysteine sulfenic acid (-SOH). The interval 365-419 is required for interaction with TBP and formation of a ternary complex with DNA and TBP; it reads SPKRICPVPPVSTVTGDENISDSEIEQYLRTPQEVRDFQRAQAARQAATSVPNPP.

This sequence belongs to the TFIIB family. In terms of assembly, component of TFIIIB complexes. The TFIIIB complex has two activities, alpha and beta. The TFIIIB-alpha activity complex is composed of TBP, BDP1, and a complex containing both BRF2 and at least four stably associated proteins; this complex inhibits the transcription by pol III via its phosphorylation by CK2; YY1 facilitates the TFIIIB-alpha complex formation. Interacts with TBP; this interaction promotes recruitment of BRF2 to TATA box-containing promoters. Interacts with TBP and the BURE sequence (GC-rich sequence downstream from the TATA box) to form a strong ternary complex which is joined by BDP1; this ternary complex stimulates pol III transcription. Forms a trimeric complex composed of TBP, BRF2 and mini-SNAPc complex (SNAP43, SNAP50, and the N-terminal third of SNAP190) on the promoter. Assembly of the TBP-BRF2 complex is stimulated by SNAP190. Interacts with MAF1 and SNAPC4. Post-translationally, in response to oxidative stress, Cys-361 is reversibly oxidized to cysteine sulfenic acid. Oxidation of Cys-361 impairs formation of a ternary complex with TBP and DNA and down-regulates expression of target genes in response to oxidative stress.

Its subcellular location is the nucleus. General activator of RNA polymerase III transcription. Factor exclusively required for RNA polymerase III transcription of genes with promoter elements upstream of the initiation sites. Contributes to the regulation of gene expression; functions as activator in the absence of oxidative stress. Down-regulates expression of target genes in response to oxidative stress. Overexpression protects cells against apoptosis in response to oxidative stress. The polypeptide is Transcription factor IIIB 50 kDa subunit (BRF2) (Homo sapiens (Human)).